The chain runs to 251 residues: MAIISLAEMMESGVHFGHQTRRWNPRMAPYIYTARNGVHIIDLVKTAQCVETAYRWVRTNAEQGKRFLFVGTKRQAAGIIAEEATRCGSYYINQRWLGGMLTNWATIKGRVDRLKELERMGETGALALRPKKEAAVLRRELERLQKYLGGIKNMRRLPDAVVIIDQKREYNAVQECQKLGIPIVAMLDTNCDPDVVDVPIPGNDDAIRSVKLIVSKLADAIYEARHGAAPVAEEYDYDGAEDEYEDDADEA.

The protein belongs to the universal ribosomal protein uS2 family.

In Synechococcus sp. (strain ATCC 27144 / PCC 6301 / SAUG 1402/1) (Anacystis nidulans), this protein is Small ribosomal subunit protein uS2.